The primary structure comprises 339 residues: DNA-directed RNA polymerase subunit alpha (339 aa).

The tract at residues 1–235 (MTIQKNWQEL…DQLNVFVNFE (235 aa)) is alpha N-terminal domain (alpha-NTD). An alpha C-terminal domain (alpha-CTD) region spans residues 251-339 (FNPAFLKKVD…ELAKRFEDHY (89 aa)).

This sequence belongs to the RNA polymerase alpha chain family. As to quaternary structure, homodimer. The RNAP catalytic core consists of 2 alpha, 1 beta, 1 beta' and 1 omega subunit. When a sigma factor is associated with the core the holoenzyme is formed, which can initiate transcription.

The enzyme catalyses RNA(n) + a ribonucleoside 5'-triphosphate = RNA(n+1) + diphosphate. Functionally, DNA-dependent RNA polymerase catalyzes the transcription of DNA into RNA using the four ribonucleoside triphosphates as substrates. The chain is DNA-directed RNA polymerase subunit alpha from Rhodopseudomonas palustris (strain BisA53).